We begin with the raw amino-acid sequence, 188 residues long: Adenylate kinase (188 aa).

Residue 11 to 16 (GAGKGT) coordinates ATP. The interval 31–60 (STGDIFRANIKDQTELGREAQRYTDAGNLV) is NMP. Residues Thr32, Arg37, 58 to 60 (NLV), 86 to 89 (GYPR), and Gln93 contribute to the AMP site. Positions 127-137 (GRAQEQGRTDD) are LID. Arg128 lines the ATP pocket. Positions 134 and 145 each coordinate AMP. Residue Gly173 participates in ATP binding.

It belongs to the adenylate kinase family. As to quaternary structure, monomer.

It localises to the cytoplasm. It catalyses the reaction AMP + ATP = 2 ADP. The protein operates within purine metabolism; AMP biosynthesis via salvage pathway; AMP from ADP: step 1/1. Catalyzes the reversible transfer of the terminal phosphate group between ATP and AMP. Plays an important role in cellular energy homeostasis and in adenine nucleotide metabolism. This chain is Adenylate kinase, found in Kocuria rhizophila (strain ATCC 9341 / DSM 348 / NBRC 103217 / DC2201).